A 169-amino-acid chain; its full sequence is Putative glycine cleavage system H protein, mitochondrial (169 aa).

Residues 60–142 (VGTVGITSYA…EEEGWICKIK (83 aa)) enclose the Lipoyl-binding domain. Lys101 carries the post-translational modification N6-lipoyllysine. Phosphoserine is present on Ser131.

It belongs to the GcvH family. As to quaternary structure, component of the glycine decarboxylase complex (GDC), which is composed of four proteins: P, T, L and H. (R)-lipoate is required as a cofactor.

It localises to the mitochondrion. The glycine cleavage system (glycine decarboxylase complex) catalyzes the degradation of glycine. The H protein shuttles the methylamine group of glycine from the P protein to the T protein. The polypeptide is Putative glycine cleavage system H protein, mitochondrial (gcv3) (Schizosaccharomyces pombe (strain 972 / ATCC 24843) (Fission yeast)).